A 158-amino-acid polypeptide reads, in one-letter code: Pleckstrin homology domain-containing family J member 1 (158 aa).

In terms of domain architecture, PH spans 15 to 108 (PTQRAAELGM…WIDAIIKASY (94 aa)).

The chain is Pleckstrin homology domain-containing family J member 1 (plekhj1) from Danio rerio (Zebrafish).